A 561-amino-acid chain; its full sequence is MSTEEVPVLIVGGGLTGLSAALFLSQHGVSCRLVEKHRGTTVLTRASGISSRTMELLRGVGLERTVIERGPKLVEGARWRELGQPADQIPWVVIRANGLHDLENAVTVEEPSLDVGHLSPTRPYWCGQDRLEPILRDEAVRRGARIDFNTRMEAFTADESGVTATIVDQATGEQSTVRARYLIAADGVRSPVRETLGITRTGHGTIGNAMSVLFKADLRDTVKGRRFVICYLPNPDEPGVLQLPEVPAVLQLFDEDRWIFGFFFDPRETSPEQFTDERCAQIIRTATGLPGLPVEVQMARPWEMSHNSARSYRSGRVFLAGDAAHVHPPAGAFGANGGIQDAHNLAWKLAAVLKGTAGDALLDTYEQERLPIGAAVADQAWIRHTWRLNDSEELRRALRESTLVATGYRYTSDAVLGAAYPEPIPAAHDLTGRPGYRVPHVWLGRGGERVSTVDLGGDAFVVLAGPDGGEWQAAADKVAQDLGVPVHCHPVGGDGQLTDPDGAFLGTTGLTRNGALLIRPDGFVAWRAEYLPEDAAGELRSALERILARTSGTPGGTALEG.

The FAD site is built by leucine 15, glutamate 35, glutamine 128, and methionine 152. Catalysis depends on tyrosine 231, which acts as the Proton acceptor. Aspartate 322 serves as a coordination point for FAD.

The protein belongs to the PheA/TfdB FAD monooxygenase family. In terms of assembly, monomer. May form oligomers up to homohexamers. FAD serves as cofactor.

It carries out the reaction tetracenomycin A2 + 2 NADPH + 2 O2 + 2 H(+) = tetracenomycin C + 2 NADP(+) + H2O. The protein operates within antibiotic biosynthesis; tetracenomycin C biosynthesis. In terms of biological role, involved in the biosynthesis of tetracenomycin C (TCM C). Catalyzes the triple hydroxylation of tetracenomycin A2 (TCM A2) at positions C-4, C-4a and C-12a to give tetracenomycin C (TCM C). Can use either NADH or NADPH as electron donors, but prefers NADPH under physiological conditions. In Streptomyces glaucescens, this protein is Tetracenomycin A2 monooxygenase-dioxygenase.